The chain runs to 411 residues: Multidrug resistance protein MdtG (411 aa).

Helical transmembrane passes span 17–37 (LFVA…VMPF), 59–79 (LVFS…GGLA), 92–112 (ALGM…WQFL), 116–136 (AVLG…ATQV), 147–167 (WLST…GLLA), 174–194 (PVFF…LFAV), 222–242 (VLTL…IAPI), 257–277 (LAFV…ISAP), 291–311 (ILVA…MVQN), 320–340 (FLLG…LIYN), and 379–399 (AVFV…WITL).

This sequence belongs to the major facilitator superfamily. DHA1 family. MdtG (TC 2.A.1.2.20) subfamily.

The protein localises to the cell inner membrane. The polypeptide is Multidrug resistance protein MdtG (Erwinia billingiae (strain Eb661)).